The following is a 560-amino-acid chain: Dihydroxy-acid dehydratase (560 aa).

Mg(2+) is bound at residue Asp78. Residue Cys119 coordinates [2Fe-2S] cluster. Residues Asp120 and Lys121 each contribute to the Mg(2+) site. Position 121 is an N6-carboxylysine (Lys121). Cys192 serves as a coordination point for [2Fe-2S] cluster. Position 446 (Glu446) interacts with Mg(2+). The active-site Proton acceptor is Ser472.

This sequence belongs to the IlvD/Edd family. Homodimer. The cofactor is [2Fe-2S] cluster. Requires Mg(2+) as cofactor.

It catalyses the reaction (2R)-2,3-dihydroxy-3-methylbutanoate = 3-methyl-2-oxobutanoate + H2O. It carries out the reaction (2R,3R)-2,3-dihydroxy-3-methylpentanoate = (S)-3-methyl-2-oxopentanoate + H2O. Its pathway is amino-acid biosynthesis; L-isoleucine biosynthesis; L-isoleucine from 2-oxobutanoate: step 3/4. It participates in amino-acid biosynthesis; L-valine biosynthesis; L-valine from pyruvate: step 3/4. Its function is as follows. Functions in the biosynthesis of branched-chain amino acids. Catalyzes the dehydration of (2R,3R)-2,3-dihydroxy-3-methylpentanoate (2,3-dihydroxy-3-methylvalerate) into 2-oxo-3-methylpentanoate (2-oxo-3-methylvalerate) and of (2R)-2,3-dihydroxy-3-methylbutanoate (2,3-dihydroxyisovalerate) into 2-oxo-3-methylbutanoate (2-oxoisovalerate), the penultimate precursor to L-isoleucine and L-valine, respectively. The protein is Dihydroxy-acid dehydratase of Anaeromyxobacter dehalogenans (strain 2CP-C).